Here is a 1648-residue protein sequence, read N- to C-terminus: Putative 1-phosphatidylinositol-3-phosphate 5-kinase FAB1C (1648 aa).

Residues 97–106 are compositionally biased toward basic and acidic residues; sequence YDKVHPRDSP. Disordered regions lie at residues 97–116, 241–276, 721–746, and 1083–1139; these read YDKV…ATES, QEDH…NDDA, SEIP…ENQL, and KTGD…GTSL. The segment covering 1084–1130 has biased composition (basic and acidic residues); the sequence is TGDDNAPRNPEMHDPPKIDRRMQEGSDERDEQSHTDSEANGDNKDPE. Residues 1316 to 1639 form the PIPK domain; the sequence is NLNNRESEPS…RFRKAMTTYF (324 aa).

Component of the PI(3,5)P2 regulatory complex at least composed of ATG18, SAC/FIG4, FAB1 and VAC14. The cofactor is Mg(2+). Requires Mn(2+) as cofactor.

The catalysed reaction is a 1,2-diacyl-sn-glycero-3-phospho-(1D-myo-inositol-3-phosphate) + ATP = a 1,2-diacyl-sn-glycero-3-phospho-(1D-myo-inositol-3,5-bisphosphate) + ADP + H(+). The PI(3,5)P2 regulatory complex regulates both the synthesis and turnover of phosphatidylinositol 3,5-bisphosphate (PtdIns(3,5)P2). Catalyzes the phosphorylation of phosphatidylinositol 3-phosphate on the fifth hydroxyl of the myo-inositol ring, to form phosphatidylinositol 3,5-bisphosphate. The polypeptide is Putative 1-phosphatidylinositol-3-phosphate 5-kinase FAB1C (FAB1C) (Arabidopsis thaliana (Mouse-ear cress)).